Consider the following 40-residue polypeptide: Photosystem II reaction center protein J (40 aa).

A helical transmembrane segment spans residues 8-28 (IPLWIIGTVTGILVIGLIGIF).

This sequence belongs to the PsbJ family. In terms of assembly, PSII is composed of 1 copy each of membrane proteins PsbA, PsbB, PsbC, PsbD, PsbE, PsbF, PsbH, PsbI, PsbJ, PsbK, PsbL, PsbM, PsbT, PsbX, PsbY, PsbZ, Psb30/Ycf12, at least 3 peripheral proteins of the oxygen-evolving complex and a large number of cofactors. It forms dimeric complexes.

The protein localises to the plastid. It localises to the chloroplast thylakoid membrane. One of the components of the core complex of photosystem II (PSII). PSII is a light-driven water:plastoquinone oxidoreductase that uses light energy to abstract electrons from H(2)O, generating O(2) and a proton gradient subsequently used for ATP formation. It consists of a core antenna complex that captures photons, and an electron transfer chain that converts photonic excitation into a charge separation. The sequence is that of Photosystem II reaction center protein J from Eucalyptus globulus subsp. globulus (Tasmanian blue gum).